Consider the following 572-residue polypeptide: Phosphoenolpyruvate-protein phosphotransferase (572 aa).

Residue H191 is the Tele-phosphohistidine intermediate of the active site. 2 residues coordinate phosphoenolpyruvate: R298 and R334. Mg(2+)-binding residues include E433 and D457. Phosphoenolpyruvate contacts are provided by residues 456-457 (ND) and R467. The active-site Proton donor is C504.

Belongs to the PEP-utilizing enzyme family. Homodimer. It depends on Mg(2+) as a cofactor.

The protein resides in the cytoplasm. The catalysed reaction is L-histidyl-[protein] + phosphoenolpyruvate = N(pros)-phospho-L-histidyl-[protein] + pyruvate. Its function is as follows. General (non sugar-specific) component of the phosphoenolpyruvate-dependent sugar phosphotransferase system (sugar PTS). This major carbohydrate active-transport system catalyzes the phosphorylation of incoming sugar substrates concomitantly with their translocation across the cell membrane. Enzyme I transfers the phosphoryl group from phosphoenolpyruvate (PEP) to the phosphoryl carrier protein (HPr). This Staphylococcus aureus (strain MRSA252) protein is Phosphoenolpyruvate-protein phosphotransferase (ptsI).